Consider the following 266-residue polypeptide: Putative carbamate hydrolase RutD (266 aa).

The protein belongs to the AB hydrolase superfamily. Hydrolase RutD family.

It catalyses the reaction carbamate + 2 H(+) = NH4(+) + CO2. Functionally, involved in pyrimidine catabolism. May facilitate the hydrolysis of carbamate, a reaction that can also occur spontaneously. This Escherichia coli O127:H6 (strain E2348/69 / EPEC) protein is Putative carbamate hydrolase RutD.